The following is a 123-amino-acid chain: Ribosome-binding factor A (123 aa).

It belongs to the RbfA family. In terms of assembly, monomer. Binds 30S ribosomal subunits, but not 50S ribosomal subunits or 70S ribosomes.

The protein localises to the cytoplasm. Functionally, one of several proteins that assist in the late maturation steps of the functional core of the 30S ribosomal subunit. Associates with free 30S ribosomal subunits (but not with 30S subunits that are part of 70S ribosomes or polysomes). Required for efficient processing of 16S rRNA. May interact with the 5'-terminal helix region of 16S rRNA. The polypeptide is Ribosome-binding factor A (Ralstonia pickettii (strain 12J)).